A 180-amino-acid chain; its full sequence is E3 ubiquitin-protein ligase RNF5 (180 aa).

An N-acetylalanine modification is found at A2. The RING-type zinc finger occupies 27–68 (CNICLETAREAVVSVCGHLYCWPCLHQWLETRPERQECPVCK). Residues 79 to 110 (LYGRGSQKPQDPRLKTPPRPQGQRPAPESRGG) are disordered. At S84 the chain carries Phosphoserine. A Phosphothreonine modification is found at T94. Position 107 is a phosphoserine (S107). The next 2 helical transmembrane spans lie at 118 to 138 (GGFH…TTVF) and 160 to 180 (SWQD…LLSI).

This sequence belongs to the RNF5 family. As to quaternary structure, interacts with PXN. Interacts with Salmonella typhimurium sopA. Interacts with JKAMP. Interacts with STING1; the interaction of endogenous proteins is dependent on viral infection. Widely expressed.

It is found in the cell membrane. It localises to the mitochondrion membrane. The protein resides in the endoplasmic reticulum membrane. It catalyses the reaction S-ubiquitinyl-[E2 ubiquitin-conjugating enzyme]-L-cysteine + [acceptor protein]-L-lysine = [E2 ubiquitin-conjugating enzyme]-L-cysteine + N(6)-ubiquitinyl-[acceptor protein]-L-lysine.. It participates in protein modification; protein ubiquitination. Functionally, membrane-bound E3 ubiquitin-protein ligase that mediates ubiquitination of target proteins. May function together with E2 ubiquitin-conjugating enzymes UBE2D1/UBCH5A and UBE2D2/UBC4. Mediates ubiquitination of PXN/paxillin,thereby regulating cell motility and localization of PXN/paxillin. Catalyzes ubiquitination of Salmonella type III secreted protein sopA. Mediates the 'Lys-63'-linked polyubiquitination of JKAMP thereby regulating JKAMP function by decreasing its association with components of the proteasome and ERAD; the ubiquitination appears to involve E2 ubiquitin-conjugating enzyme UBE2N. Mediates the 'Lys-48'-linked polyubiquitination of STING1 at 'Lys-150' leading to its proteasomal degradation; the ubiquitination occurs in mitochondria after viral transfection and regulates antiviral responses. Catalyzes ubiquitination and subsequent degradation of ATG4B, thereby inhibiting autophagy. The polypeptide is E3 ubiquitin-protein ligase RNF5 (Homo sapiens (Human)).